We begin with the raw amino-acid sequence, 201 residues long: ATP-dependent Clp protease proteolytic subunit 2 (201 aa).

The Nucleophile role is filled by S98. Residue H123 is part of the active site.

The protein belongs to the peptidase S14 family. As to quaternary structure, fourteen ClpP subunits assemble into 2 heptameric rings which stack back to back to give a disk-like structure with a central cavity, resembling the structure of eukaryotic proteasomes.

Its subcellular location is the cytoplasm. The catalysed reaction is Hydrolysis of proteins to small peptides in the presence of ATP and magnesium. alpha-casein is the usual test substrate. In the absence of ATP, only oligopeptides shorter than five residues are hydrolyzed (such as succinyl-Leu-Tyr-|-NHMec, and Leu-Tyr-Leu-|-Tyr-Trp, in which cleavage of the -Tyr-|-Leu- and -Tyr-|-Trp bonds also occurs).. Its function is as follows. Cleaves peptides in various proteins in a process that requires ATP hydrolysis. Has a chymotrypsin-like activity. Plays a major role in the degradation of misfolded proteins. In Rhizobium johnstonii (strain DSM 114642 / LMG 32736 / 3841) (Rhizobium leguminosarum bv. viciae), this protein is ATP-dependent Clp protease proteolytic subunit 2.